Reading from the N-terminus, the 335-residue chain is Eukaryotic translation initiation factor 3 subunit I (335 aa).

WD repeat units follow at residues 8 to 47 (GHER…RLGT), 50 to 91 (GHQG…KTWD), 145 to 184 (CAES…LLFN), 189 to 228 (EPDL…VMKT), and 286 to 325 (GHFG…FDFT).

It belongs to the eIF-3 subunit I family. As to quaternary structure, component of the eukaryotic translation initiation factor 3 (eIF-3) complex.

It is found in the cytoplasm. In terms of biological role, component of the eukaryotic translation initiation factor 3 (eIF-3) complex, which is involved in protein synthesis of a specialized repertoire of mRNAs and, together with other initiation factors, stimulates binding of mRNA and methionyl-tRNAi to the 40S ribosome. The eIF-3 complex specifically targets and initiates translation of a subset of mRNAs involved in cell proliferation. In Botryotinia fuckeliana (strain B05.10) (Noble rot fungus), this protein is Eukaryotic translation initiation factor 3 subunit I (tif34).